Consider the following 496-residue polypeptide: Cytochrome P450 4ae1 (496 aa).

Cysteine 443 is a heme binding site.

Belongs to the cytochrome P450 family. Requires heme as cofactor.

The protein localises to the endoplasmic reticulum membrane. Its subcellular location is the microsome membrane. May be involved in the metabolism of insect hormones and in the breakdown of synthetic insecticides. This is Cytochrome P450 4ae1 (Cyp4ae1) from Drosophila melanogaster (Fruit fly).